We begin with the raw amino-acid sequence, 347 residues long: Protein RecA (347 aa).

66–73 (GPESSGKT) lines the ATP pocket.

This sequence belongs to the RecA family.

The protein resides in the cytoplasm. Functionally, can catalyze the hydrolysis of ATP in the presence of single-stranded DNA, the ATP-dependent uptake of single-stranded DNA by duplex DNA, and the ATP-dependent hybridization of homologous single-stranded DNAs. It interacts with LexA causing its activation and leading to its autocatalytic cleavage. This Allochromatium vinosum (Chromatium vinosum) protein is Protein RecA.